The sequence spans 734 residues: Photosystem I P700 chlorophyll a apoprotein A2 (734 aa).

The next 8 helical transmembrane spans lie at 46 to 69 (IFAS…FHVA), 135 to 158 (LYTG…LHLQ), 175 to 199 (LNHH…HVAI), 273 to 291 (IAHH…GHMY), 330 to 353 (LHFQ…QHMY), 369 to 395 (AALY…IFFI), 417 to 439 (AIIS…LYVH), and 517 to 535 (FLVH…LILV). Residues Cys559 and Cys568 each coordinate [4Fe-4S] cluster. Transmembrane regions (helical) follow at residues 575 to 596 (AFYL…YWHW) and 643 to 665 (LSVW…MFLI). His654, Met662, and Tyr670 together coordinate chlorophyll a. Phylloquinone is bound at residue Trp671. Residues 707–727 (LVGLAHFSVGYIFTYAAFLIA) traverse the membrane as a helical segment.

It belongs to the PsaA/PsaB family. In terms of assembly, the PsaA/B heterodimer binds the P700 chlorophyll special pair and subsequent electron acceptors. PSI consists of a core antenna complex that captures photons, and an electron transfer chain that converts photonic excitation into a charge separation. The eukaryotic PSI reaction center is composed of at least 11 subunits. It depends on P700 is a chlorophyll a/chlorophyll a' dimer, A0 is one or more chlorophyll a, A1 is one or both phylloquinones and FX is a shared 4Fe-4S iron-sulfur center. as a cofactor.

The protein localises to the plastid. Its subcellular location is the chloroplast thylakoid membrane. The enzyme catalyses reduced [plastocyanin] + hnu + oxidized [2Fe-2S]-[ferredoxin] = oxidized [plastocyanin] + reduced [2Fe-2S]-[ferredoxin]. In terms of biological role, psaA and PsaB bind P700, the primary electron donor of photosystem I (PSI), as well as the electron acceptors A0, A1 and FX. PSI is a plastocyanin-ferredoxin oxidoreductase, converting photonic excitation into a charge separation, which transfers an electron from the donor P700 chlorophyll pair to the spectroscopically characterized acceptors A0, A1, FX, FA and FB in turn. Oxidized P700 is reduced on the lumenal side of the thylakoid membrane by plastocyanin. This chain is Photosystem I P700 chlorophyll a apoprotein A2, found in Solanum bulbocastanum (Wild potato).